A 432-amino-acid chain; its full sequence is Tryptophan--tRNA ligase (432 aa).

ATP is bound by residues 13–15 and 21–22; these read TTS and GN. Residues 14–22 carry the 'HIGH' region motif; sequence TSGTPHLGN. Aspartate 146 contributes to the L-tryptophan binding site. ATP is bound by residues 158 to 160, leucine 198, and 205 to 209; these read GRD and KMSKS. The short motif at 205 to 209 is the 'KMSKS' region element; sequence KMSKS.

It belongs to the class-I aminoacyl-tRNA synthetase family. In terms of assembly, homodimer.

It localises to the cytoplasm. It catalyses the reaction tRNA(Trp) + L-tryptophan + ATP = L-tryptophyl-tRNA(Trp) + AMP + diphosphate + H(+). Functionally, catalyzes the attachment of tryptophan to tRNA(Trp). This is Tryptophan--tRNA ligase from Xanthomonas axonopodis pv. citri (strain 306).